A 346-amino-acid polypeptide reads, in one-letter code: N-acetyl-gamma-glutamyl-phosphate reductase (346 aa).

Residue Cys150 is part of the active site.

It belongs to the NAGSA dehydrogenase family. Type 1 subfamily.

The protein resides in the cytoplasm. It carries out the reaction N-acetyl-L-glutamate 5-semialdehyde + phosphate + NADP(+) = N-acetyl-L-glutamyl 5-phosphate + NADPH + H(+). It participates in amino-acid biosynthesis; L-arginine biosynthesis; N(2)-acetyl-L-ornithine from L-glutamate: step 3/4. Functionally, catalyzes the NADPH-dependent reduction of N-acetyl-5-glutamyl phosphate to yield N-acetyl-L-glutamate 5-semialdehyde. The polypeptide is N-acetyl-gamma-glutamyl-phosphate reductase (Brevibacillus brevis (strain 47 / JCM 6285 / NBRC 100599)).